We begin with the raw amino-acid sequence, 263 residues long: ATP synthase subunit a (263 aa).

6 helical membrane passes run 26–46 (VHLDTLFFSLVAGATFLFFFS), 86–106 (VAPLALTVFCWVFVMNAIDLI), 130–150 (DISATLGMAICVFCLIIFYTI), 166–186 (PFNHWAFIPVNFVLEIVTLLA), 195–215 (LFGNMYAGELIFILIAVMYMA), and 229–249 (LAWAIFHILVITLQAFIFMML).

Belongs to the ATPase A chain family. As to quaternary structure, F-type ATPases have 2 components, CF(1) - the catalytic core - and CF(0) - the membrane proton channel. CF(1) has five subunits: alpha(3), beta(3), gamma(1), delta(1), epsilon(1). CF(0) has three main subunits: a(1), b(2) and c(9-12). The alpha and beta chains form an alternating ring which encloses part of the gamma chain. CF(1) is attached to CF(0) by a central stalk formed by the gamma and epsilon chains, while a peripheral stalk is formed by the delta and b chains.

Its subcellular location is the cell inner membrane. Key component of the proton channel; it plays a direct role in the translocation of protons across the membrane. In Glaesserella parasuis serovar 5 (strain SH0165) (Haemophilus parasuis), this protein is ATP synthase subunit a.